Reading from the N-terminus, the 312-residue chain is tRNA dimethylallyltransferase (312 aa).

15-22 (GPTAAGKS) provides a ligand contact to ATP. 17–22 (TAAGKS) is a binding site for substrate. The tract at residues 40–43 (DSMQ) is interaction with substrate tRNA.

The protein belongs to the IPP transferase family. As to quaternary structure, monomer. Mg(2+) is required as a cofactor.

The catalysed reaction is adenosine(37) in tRNA + dimethylallyl diphosphate = N(6)-dimethylallyladenosine(37) in tRNA + diphosphate. Catalyzes the transfer of a dimethylallyl group onto the adenine at position 37 in tRNAs that read codons beginning with uridine, leading to the formation of N6-(dimethylallyl)adenosine (i(6)A). The polypeptide is tRNA dimethylallyltransferase (Streptomyces coelicolor (strain ATCC BAA-471 / A3(2) / M145)).